The chain runs to 149 residues: Probable flagellum biosynthesis repressor protein FlbT (149 aa).

This sequence belongs to the FlbT family.

Has a post-transcriptional repressor function in flagellum biogenesis. Associates with the 5'-UTR of fljK mRNA and promotes its degradation. The chain is Probable flagellum biosynthesis repressor protein FlbT from Allorhizobium ampelinum (strain ATCC BAA-846 / DSM 112012 / S4) (Agrobacterium vitis (strain S4)).